Consider the following 368-residue polypeptide: Probable endopolygalacturonase I (368 aa).

Residues 1–18 (MRSVEILGLAALGSLVAA) form the signal peptide. The propeptide occupies 19–31 (APSPSRVSNSAKK). An intrachain disulfide couples Cys-35 to Cys-50. 2 PbH1 repeats span residues 162–192 (ATNL…DIGE) and 193–214 (SNGV…AINS). The active-site Proton donor is Asp-207. The cysteines at positions 209 and 225 are disulfide-linked. His-229 is an active-site residue. 3 PbH1 repeats span residues 244 to 265 (VKNV…RIKT), 273 to 295 (VGDV…VIEQ), and 307 to 328 (TTGV…ASNA). Residue Asn-246 is glycosylated (N-linked (GlcNAc...) asparagine). 2 disulfides stabilise this stretch: Cys-335–Cys-340 and Cys-359–Cys-368.

Belongs to the glycosyl hydrolase 28 family.

Its subcellular location is the secreted. It catalyses the reaction (1,4-alpha-D-galacturonosyl)n+m + H2O = (1,4-alpha-D-galacturonosyl)n + (1,4-alpha-D-galacturonosyl)m.. Involved in maceration and soft-rotting of plant tissue. Hydrolyzes the 1,4-alpha glycosidic bonds of de-esterified pectate in the smooth region of the plant cell wall. The protein is Probable endopolygalacturonase I (pgaI) of Aspergillus clavatus (strain ATCC 1007 / CBS 513.65 / DSM 816 / NCTC 3887 / NRRL 1 / QM 1276 / 107).